The following is a 193-amino-acid chain: Tetrahydromethanopterin S-methyltransferase subunit A 2 (193 aa).

Topologically, residues 1–38 (MADKKPTAENWPVVSGDYIVGDPESPVAVTTLASHNED) are cytoplasmic. A helical membrane pass occupies residues 39-58 (IPAAAGAAIAGPCKTENLGI). At 59–193 (EKVVANIISN…SESEKIESEA (135 aa)) the chain is on the extracellular side. 5-hydroxybenzimidazolylcob(I)amide is bound at residue His-84. Residues 174–193 (SKKSSFVESSSESEKIESEA) form a disordered region.

It belongs to the MtrA family. The complex is composed of 8 subunits; MtrA, MtrB, MtrC, MtrD, MtrE, MtrF, MtrG and MtrH. Requires 5-hydroxybenzimidazolylcob(I)amide as cofactor.

It is found in the cell membrane. It carries out the reaction 5-methyl-5,6,7,8-tetrahydromethanopterin + coenzyme M + 2 Na(+)(in) = 5,6,7,8-tetrahydromethanopterin + methyl-coenzyme M + 2 Na(+)(out). Its pathway is one-carbon metabolism; methanogenesis from CO(2); methyl-coenzyme M from 5,10-methylene-5,6,7,8-tetrahydromethanopterin: step 2/2. Its function is as follows. Part of a complex that catalyzes the formation of methyl-coenzyme M and tetrahydromethanopterin from coenzyme M and methyl-tetrahydromethanopterin. This is an energy-conserving, sodium-ion translocating step. This Methanobrevibacter ruminantium (strain ATCC 35063 / DSM 1093 / JCM 13430 / OCM 146 / M1) (Methanobacterium ruminantium) protein is Tetrahydromethanopterin S-methyltransferase subunit A 2.